The following is a 396-amino-acid chain: Obg-like ATPase 1 (396 aa).

Positions 23–283 (LKIGIVGLPN…LSAEERQKYL (261 aa)) constitute an OBG-type G domain. 32-37 (NVGKST) serves as a coordination point for ATP. Residues Ser36 and Thr56 each contribute to the Mg(2+) site. Leu231 contacts ATP. A Nuclear export signal motif is present at residues 267 to 274 (LELRLQEL). Position 294 is an N6-acetyllysine (Lys294). Positions 304–387 (QLEYFFTAGP…EDGDIIFFKF (84 aa)) constitute a TGS domain.

The protein belongs to the TRAFAC class OBG-HflX-like GTPase superfamily. OBG GTPase family. YchF/OLA1 subfamily. Monomer. Requires Mg(2+) as cofactor.

It localises to the cytoplasm. Its subcellular location is the nucleus. The protein localises to the nucleolus. Its function is as follows. Hydrolyzes ATP, and can also hydrolyze GTP with lower efficiency. Has lower affinity for GTP. This chain is Obg-like ATPase 1, found in Bos taurus (Bovine).